A 428-amino-acid polypeptide reads, in one-letter code: Glutamine synthetase, chloroplastic (428 aa).

Residues 1–49 constitute a chloroplast transit peptide; it reads MAQILAASPTCQMRLTKPSSIASSKLWNSVVLKQKKQSSSKVRSFKVMA. The 81-residue stretch at 75-155 folds into the GS beta-grasp domain; the sequence is IIAEYIWIGG…VICDTYTPAG (81 aa). A disordered region spans residues 94 to 120; sequence RTLEKPVEDPSELPKWNYDGSSTGQAP. Position 104 is a phosphoserine (Ser104). Residues 159–428 enclose the GS catalytic domain; the sequence is PTNKRARAAE…LAAQKLSLKV (270 aa).

The protein belongs to the glutamine synthetase family. In terms of assembly, homooctamer.

Its subcellular location is the plastid. It localises to the chloroplast. It carries out the reaction L-glutamate + NH4(+) + ATP = L-glutamine + ADP + phosphate + H(+). Functionally, the light-modulated chloroplast enzyme, encoded by a nuclear gene and expressed primarily in leaves, is responsible for the reassimilation of the ammonia generated by photorespiration. This Brassica napus (Rape) protein is Glutamine synthetase, chloroplastic (GLN2).